Reading from the N-terminus, the 197-residue chain is LexA repressor (197 aa).

The H-T-H motif DNA-binding region spans 28-47 (VREIARRFRITPRGALLHLI). Active-site for autocatalytic cleavage activity residues include S119 and K156.

Belongs to the peptidase S24 family. In terms of assembly, homodimer.

It catalyses the reaction Hydrolysis of Ala-|-Gly bond in repressor LexA.. Its function is as follows. Represses a number of genes involved in the response to DNA damage (SOS response), including recA and lexA. In the presence of single-stranded DNA, RecA interacts with LexA causing an autocatalytic cleavage which disrupts the DNA-binding part of LexA, leading to derepression of the SOS regulon and eventually DNA repair. The chain is LexA repressor from Thermotoga maritima (strain ATCC 43589 / DSM 3109 / JCM 10099 / NBRC 100826 / MSB8).